The sequence spans 164 residues: Interferon gamma (164 aa).

The signal sequence occupies residues 1 to 19 (MTCQTYCLFVLSVIMIYFG). 3 N-linked (GlcNAc...) asparagine glycosylation sites follow: N42, N61, and N95.

It belongs to the type II (or gamma) interferon family. In terms of assembly, homodimer.

The protein localises to the secreted. In terms of biological role, produced by lymphocytes activated by specific antigens or mitogens. IFN-gamma, in addition to having antiviral activity, has important immunoregulatory functions. It is a potent activator of macrophages, it has antiproliferative effects on transformed cells and it can potentiate the antiviral and antitumor effects of the type I interferons. The polypeptide is Interferon gamma (IFNG) (Anas platyrhynchos (Mallard)).